The following is a 140-amino-acid chain: Peptidyl-prolyl cis-trans isomerase FKBP2 (140 aa).

A signal peptide spans 1 to 22; that stretch reads MRLSWILTILSICLSALAAATG. Residues 47 to 135 enclose the PPIase FKBP-type domain; that stretch reads GDVLHMHYTG…VFEVELLKIE (89 aa). Positions 137–140 match the Prevents secretion from ER motif; it reads RSEL.

This sequence belongs to the FKBP-type PPIase family. FKBP2 subfamily. Interacts with ARFGEF1/BIG1 and the C-terminal of EPB41L2.

It is found in the endoplasmic reticulum membrane. It catalyses the reaction [protein]-peptidylproline (omega=180) = [protein]-peptidylproline (omega=0). Its activity is regulated as follows. Inhibited by both FK506 and rapamycin. Functionally, PPIases accelerate the folding of proteins. It catalyzes the cis-trans isomerization of proline imidic peptide bonds in oligopeptides. This is Peptidyl-prolyl cis-trans isomerase FKBP2 (Fkbp2) from Mus musculus (Mouse).